Here is a 168-residue protein sequence, read N- to C-terminus: Crossover junction endodeoxyribonuclease RuvC (168 aa).

Active-site residues include Asp-7, Glu-64, and Asp-136. Mg(2+)-binding residues include Asp-7, Glu-64, and Asp-136.

It belongs to the RuvC family. As to quaternary structure, homodimer which binds Holliday junction (HJ) DNA. The HJ becomes 2-fold symmetrical on binding to RuvC with unstacked arms; it has a different conformation from HJ DNA in complex with RuvA. In the full resolvosome a probable DNA-RuvA(4)-RuvB(12)-RuvC(2) complex forms which resolves the HJ. Mg(2+) serves as cofactor.

The protein resides in the cytoplasm. It carries out the reaction Endonucleolytic cleavage at a junction such as a reciprocal single-stranded crossover between two homologous DNA duplexes (Holliday junction).. Functionally, the RuvA-RuvB-RuvC complex processes Holliday junction (HJ) DNA during genetic recombination and DNA repair. Endonuclease that resolves HJ intermediates. Cleaves cruciform DNA by making single-stranded nicks across the HJ at symmetrical positions within the homologous arms, yielding a 5'-phosphate and a 3'-hydroxyl group; requires a central core of homology in the junction. The consensus cleavage sequence is 5'-(A/T)TT(C/G)-3'. Cleavage occurs on the 3'-side of the TT dinucleotide at the point of strand exchange. HJ branch migration catalyzed by RuvA-RuvB allows RuvC to scan DNA until it finds its consensus sequence, where it cleaves and resolves the cruciform DNA. This is Crossover junction endodeoxyribonuclease RuvC from Polynucleobacter necessarius subsp. necessarius (strain STIR1).